The primary structure comprises 531 residues: MEKGARQRNNTAKNHPGSDTSPEAEASSGGGGVALKKEIGLVSACGIIVGNIIGSGIFVSPKGVLENAGSVGLALIVWIVTGIITAVGALCYAELGVTIPKSGGDYSYVKDIFGGLAGFLRLWIAVLVIYPTNQAVIALTFSNYVLQPLFPTCFPPESGLRLLAAICLLLLTWVNCSSVRWATRVQDIFTAGKLLALALIIIMGIVQICKGEFFWLEPKNAFENFQEPDIGLVALAFLQGSFAYGGWNFLNYVTEELVDPYKNLPRAIFISIPLVTFVYVFANIAYVTAMSPQELLASNAVAVTFGEKLLGVMAWIMPISVALSTFGGVNGSLFTSSRLFFAGAREGHLPSVLAMIHVKRCTPIPALLFTCLSTLLMLVTSDMYTLINYVGFINYLFYGVTVAGQIVLRWKKPDIPRPIKVSLLFPIIYLLFWAFLLIFSLWSEPVVCGIGLAIMLTGVPVYFLGVYWQHKPKCFNDFIKSLTLVSQKMCVVVYPQEGNSGAEETTDDLEEQHKPIFKPTPVKDPDSEEQP.

Positions 1 to 29 are disordered; the sequence is MEKGARQRNNTAKNHPGSDTSPEAEASSG. At 1–43 the chain is on the cytoplasmic side; the sequence is MEKGARQRNNTAKNHPGSDTSPEAEASSGGGGVALKKEIGLVS. Over residues 7-21 the composition is skewed to polar residues; it reads QRNNTAKNHPGSDTS. Residues serine 18, serine 21, serine 27, and serine 28 each carry the phosphoserine modification. The chain crosses the membrane as a helical span at residues 44-64; that stretch reads ACGIIVGNIIGSGIFVSPKGV. Isoleucine 52 serves as a coordination point for L-leucine. The Extracellular segment spans residues 65 to 72; the sequence is LENAGSVG. The helical transmembrane segment at 73-94 threads the bilayer; the sequence is LALIVWIVTGIITAVGALCYAE. At 95 to 115 the chain is on the cytoplasmic side; that stretch reads LGVTIPKSGGDYSYVKDIFGG. The helical transmembrane segment at 116 to 148 threads the bilayer; the sequence is LAGFLRLWIAVLVIYPTNQAVIALTFSNYVLQP. Residue asparagine 133 participates in L-tryptophan binding. The Extracellular segment spans residues 149–156; sequence LFPTCFPP. A helical membrane pass occupies residues 157–177; it reads ESGLRLLAAICLLLLTWVNCS. Residues 178-180 are Cytoplasmic-facing; the sequence is SVR. A helical transmembrane segment spans residues 181-209; sequence WATRVQDIFTAGKLLALALIIIMGIVQIC. The Extracellular portion of the chain corresponds to 210-229; the sequence is KGEFFWLEPKNAFENFQEPD. A helical membrane pass occupies residues 230–251; sequence IGLVALAFLQGSFAYGGWNFLN. Residue glycine 245 coordinates L-leucine. Residues 252 to 264 are Cytoplasmic-facing; sequence YVTEELVDPYKNL. A helical membrane pass occupies residues 265 to 286; the sequence is PRAIFISIPLVTFVYVFANIAY. At 287–311 the chain is on the extracellular side; the sequence is VTAMSPQELLASNAVAVTFGEKLLG. A helical transmembrane segment spans residues 312–337; sequence VMAWIMPISVALSTFGGVNGSLFTSS. The Cytoplasmic segment spans residues 338–363; the sequence is RLFFAGAREGHLPSVLAMIHVKRCTP. Residues 364–381 traverse the membrane as a helical segment; the sequence is IPALLFTCLSTLLMLVTS. Topologically, residues 382 to 385 are extracellular; that stretch reads DMYT. The chain crosses the membrane as a helical span at residues 386 to 407; it reads LINYVGFINYLFYGVTVAGQIV. L-tryptophan is bound at residue asparagine 394. Topologically, residues 408–422 are cytoplasmic; that stretch reads LRWKKPDIPRPIKVS. The next 2 helical transmembrane spans lie at 423–445 and 446–465; these read LLFP…WSEP and VVCG…YFLG. Over 466-531 the chain is Cytoplasmic; sequence VYWQHKPKCF…VKDPDSEEQP (66 aa). Positions 499–531 are disordered; the sequence is NSGAEETTDDLEEQHKPIFKPTPVKDPDSEEQP. Serine 527 carries the post-translational modification Phosphoserine.

It belongs to the amino acid-polyamine-organocation (APC) superfamily. L-type amino acid transporter (LAT) (TC 2.A.3.8) family. As to quaternary structure, disulfide-linked heterodimer composed of the catalytic light chain subunit SLC7A8 and the heavy chain subunit SLC3A2. SLC3A2 acts as a chaperone for correct plasma membrane trafficking and stabilization of SLC7A8 and modulates the substrate affinity and specificity of SLC7A8. ICAM-1 associates with the heterodimer SLC3A2/SLC7A8; facilitates leucine uptake. In terms of tissue distribution, strongly expressed in kidney and small intestine. Moderately present in placenta, ovary and brain. Expressed in the inner ear.

The protein resides in the cell membrane. It is found in the basolateral cell membrane. It catalyses the reaction L-histidine(in) + L-phenylalanine(out) = L-histidine(out) + L-phenylalanine(in). The enzyme catalyses L-tryptophan(in) + L-phenylalanine(out) = L-tryptophan(out) + L-phenylalanine(in). It carries out the reaction L-isoleucine(in) + L-phenylalanine(out) = L-isoleucine(out) + L-phenylalanine(in). The catalysed reaction is L-valine(in) + L-phenylalanine(out) = L-valine(out) + L-phenylalanine(in). It catalyses the reaction L-leucine(in) + L-phenylalanine(out) = L-leucine(out) + L-phenylalanine(in). The enzyme catalyses L-glutamine(in) + L-phenylalanine(out) = L-glutamine(out) + L-phenylalanine(in). It carries out the reaction L-cysteine(in) + L-phenylalanine(out) = L-cysteine(out) + L-phenylalanine(in). The catalysed reaction is L-phenylalanine(out) + L-methionine(in) = L-phenylalanine(in) + L-methionine(out). It catalyses the reaction L-leucine(out) + L-methionine(in) = L-leucine(in) + L-methionine(out). The enzyme catalyses L-cysteine(out) + L-methionine(in) = L-cysteine(in) + L-methionine(out). It carries out the reaction S-methylmercury-L-cysteine(out) + L-methionine(in) = S-methylmercury-L-cysteine(in) + L-methionine(out). The catalysed reaction is S-methylmercury-L-cysteine(in) + L-leucine(out) = S-methylmercury-L-cysteine(out) + L-leucine(in). It catalyses the reaction S-methylmercury-L-cysteine(in) + L-phenylalanine(out) = S-methylmercury-L-cysteine(out) + L-phenylalanine(in). The enzyme catalyses L-phenylalanine(out) + L-serine(in) = L-phenylalanine(in) + L-serine(out). It carries out the reaction L-phenylalanine(out) + glycine(in) = L-phenylalanine(in) + glycine(out). The catalysed reaction is L-phenylalanine(out) + L-alanine(in) = L-phenylalanine(in) + L-alanine(out). It catalyses the reaction L-tryptophan(in) = L-tryptophan(out). The enzyme catalyses 3,3',5-triiodo-L-thyronine(out) = 3,3',5-triiodo-L-thyronine(in). It carries out the reaction 3,3'-diiodo-L-thyronine(out) = 3,3'-diiodo-L-thyronine(in). The catalysed reaction is L-dopa(out) + L-phenylalanine(in) = L-dopa(in) + L-phenylalanine(out). Its function is as follows. Associates with SLC3A2 to form a functional heterodimeric complex that translocates small and large neutral amino acids with broad specificity and a stoichiometry of 1:1. Functions as amino acid antiporter mediating the influx of extracellular essential amino acids mainly in exchange with the efflux of highly concentrated intracellular amino acids. Has relatively symmetrical selectivities but strongly asymmetrical substrate affinities at both the intracellular and extracellular sides of the transporter. This asymmetry allows SLC7A8 to regulate intracellular amino acid pools (mM concentrations) by exchange with external amino acids (uM concentration range), equilibrating the relative concentrations of different amino acids across the plasma membrane instead of mediating their net uptake. May play an essential role in the reabsorption of neutral amino acids from the epithelial cells to the bloodstream in the kidney. Involved in the uptake of methylmercury (MeHg) when administered as the L-cysteine or D,L-homocysteine complexes, and hence plays a role in metal ion homeostasis and toxicity. Involved in the cellular activity of small molecular weight nitrosothiols, via the stereoselective transport of L-nitrosocysteine (L-CNSO) across the transmembrane. Imports the thyroid hormone diiodothyronine (T2) and to a smaller extent triiodothyronine (T3) but not rT 3 or thyroxine (T4). Mediates the uptake of L-DOPA. May participate in auditory function. This chain is Large neutral amino acids transporter small subunit 2 (Slc7a8), found in Mus musculus (Mouse).